The sequence spans 301 residues: Homoserine kinase (301 aa).

ATP is bound at residue 81–91 (RPSSGLGSSAA).

The protein belongs to the GHMP kinase family. Homoserine kinase subfamily.

The protein localises to the cytoplasm. The enzyme catalyses L-homoserine + ATP = O-phospho-L-homoserine + ADP + H(+). Its pathway is amino-acid biosynthesis; L-threonine biosynthesis; L-threonine from L-aspartate: step 4/5. Catalyzes the ATP-dependent phosphorylation of L-homoserine to L-homoserine phosphate. The sequence is that of Homoserine kinase from Halobacterium salinarum (strain ATCC 29341 / DSM 671 / R1).